Consider the following 404-residue polypeptide: Argininosuccinate synthase (404 aa).

ATP is bound by residues 10–18 and alanine 37; that span reads AYSGGLDTS. L-citrulline-binding residues include tyrosine 88 and serine 93. ATP is bound at residue glycine 118. 3 residues coordinate L-aspartate: threonine 120, asparagine 124, and aspartate 125. An L-citrulline-binding site is contributed by asparagine 124. Arginine 128, serine 178, serine 187, glutamate 263, and tyrosine 275 together coordinate L-citrulline.

Belongs to the argininosuccinate synthase family. Type 1 subfamily. Homotetramer.

It is found in the cytoplasm. It carries out the reaction L-citrulline + L-aspartate + ATP = 2-(N(omega)-L-arginino)succinate + AMP + diphosphate + H(+). Its pathway is amino-acid biosynthesis; L-arginine biosynthesis; L-arginine from L-ornithine and carbamoyl phosphate: step 2/3. The chain is Argininosuccinate synthase from Hahella chejuensis (strain KCTC 2396).